Here is a 91-residue protein sequence, read N- to C-terminus: Potassium channel toxin MeuTXK-beta-1 (91 aa).

Residues 1 to 19 form the signal peptide; sequence MQRNLVVLLFLGMVALSSC. One can recognise a BetaSPN-type CS-alpha/beta domain in the interval 54–91; sequence QFGCPAYQGYCDDHCQDIEKKEGFCHGFKCKCGIPMGF. Cystine bridges form between C57/C78, C64/C83, and C68/C85.

In terms of tissue distribution, expressed by the venom gland.

It localises to the secreted. In terms of biological role, has a low affinity binding to potassium channels of rat brain synaptosomes. Displays weak antibacterial activity against Stenotrophomonas sp. Strongly inhibits the development of the Plasmodium berghei ookinetes. Displays slight hemolytic effect on mouse erythrocytes. Induces cytolysis on Xenopus oocytes at high concentrations. Is not toxic towards mice and towards the insect Tenebrio molitor. This Mesobuthus eupeus (Lesser Asian scorpion) protein is Potassium channel toxin MeuTXK-beta-1.